The sequence spans 1090 residues: Protein CHROMATIN REMODELING 24 (1090 aa).

2 disordered regions span residues 1 to 51 (MAEN…MIKL) and 247 to 273 (VGKQNSYSGRHFDDNSEDNRQGYNLDR). A Nuclear localization signal motif is present at residues 44-51 (TKKSMIKL). The span at 256–273 (RHFDDNSEDNRQGYNLDR) shows a compositional bias: basic and acidic residues. The region spanning 389-564 (WSLHTQGKGG…WALFNFSCPG (176 aa)) is the Helicase ATP-binding domain. 402–409 (DDMGLGKT) lines the ATP pocket. Residues 515–518 (DEGH) carry the DEAH box motif. The Helicase C-terminal domain occupies 736–895 (FIMSLLENLI…IRYFSQQDLR (160 aa)). A coiled-coil region spans residues 1043–1069 (DGGAKIQKQIAELTRELKDMKAAERIN).

The protein belongs to the SNF2/RAD54 helicase family.

It localises to the nucleus. DNA helicase that acts as an essential component of the spindle assembly checkpoint. Probable chromatin remodeling factor that regulate homologous recombination (HR) and non-homologous recombination (NHR). The polypeptide is Protein CHROMATIN REMODELING 24 (Arabidopsis thaliana (Mouse-ear cress)).